Reading from the N-terminus, the 245-residue chain is Orotidine 5'-phosphate decarboxylase (245 aa).

Substrate is bound by residues D22, K44, 71 to 80 (DLKFHDIPNT), T131, R192, Q201, G221, and R222. Catalysis depends on K73, which acts as the Proton donor.

It belongs to the OMP decarboxylase family. Type 1 subfamily. In terms of assembly, homodimer.

The enzyme catalyses orotidine 5'-phosphate + H(+) = UMP + CO2. It functions in the pathway pyrimidine metabolism; UMP biosynthesis via de novo pathway; UMP from orotate: step 2/2. Its function is as follows. Catalyzes the decarboxylation of orotidine 5'-monophosphate (OMP) to uridine 5'-monophosphate (UMP). This is Orotidine 5'-phosphate decarboxylase from Escherichia coli O81 (strain ED1a).